We begin with the raw amino-acid sequence, 464 residues long: MANGKVIQVIGSVVDVEFSADSMPALFNALEIPRDNGKMVLEVQSHVGNNRVKCLSFTPTDGLERGAEVIDTKRPLSVPVGRNTLGRIFNVLGEPLDNRGDVKAEKTMPIHRSAPAMDELESSAQVLETGLKVIDLIAPFARGGKIGALGGAGVGKTVLIQELIRNIATEHEGFSVFAGVGERSREGNDLWHEMEDSGVLPKTTMVFGQMNELPAVRLRIALTGLTMAEYFRDEERQDVLLFIDNIYRYTLAGMEVSALLGRMPSAVGYQPTLATEMGALQERIASTKQGSITSFQAVYVPADDYTDPGVVATFGHLDAMIALERSLAEQALYPAVDPLASNSRILDPQVVGEEHYQVARDVQKVLQRYKDLQDVIAILGMEELSEEDKLTVARARRIQRFLTQPMFVSEVFTGRPGQYVSLAETIRGFKEILEGKHDSLPEQAFYMVGTIDDAVAEAKKLSAA.

150–157 (GGAGVGKT) is a binding site for ATP.

It belongs to the ATPase alpha/beta chains family. In terms of assembly, F-type ATPases have 2 components, CF(1) - the catalytic core - and CF(0) - the membrane proton channel. CF(1) has five subunits: alpha(3), beta(3), gamma(1), delta(1), epsilon(1). CF(0) has three main subunits: a(1), b(2) and c(9-12). The alpha and beta chains form an alternating ring which encloses part of the gamma chain. CF(1) is attached to CF(0) by a central stalk formed by the gamma and epsilon chains, while a peripheral stalk is formed by the delta and b chains.

The protein resides in the cell membrane. It carries out the reaction ATP + H2O + 4 H(+)(in) = ADP + phosphate + 5 H(+)(out). Functionally, produces ATP from ADP in the presence of a proton gradient across the membrane. The catalytic sites are hosted primarily by the beta subunits. The chain is ATP synthase subunit beta from Dehalococcoides mccartyi (strain ATCC BAA-2266 / KCTC 15142 / 195) (Dehalococcoides ethenogenes (strain 195)).